We begin with the raw amino-acid sequence, 74 residues long: Conotoxin MiK41 (74 aa).

The N-terminal stretch at 1–22 is a signal peptide; it reads MKLTCVLIITVLFLTACQLTTA. The propeptide occupies 23–45; the sequence is VTYSRGEHKHRALMSTGTNYRLP. Disulfide bonds link cysteine 48–cysteine 62, cysteine 55–cysteine 66, and cysteine 61–cysteine 73.

The protein belongs to the conotoxin O1 superfamily. Expressed by the venom duct.

Its subcellular location is the secreted. The sequence is that of Conotoxin MiK41 from Conus miles (Soldier cone).